Consider the following 332-residue polypeptide: Adenine deaminase (332 aa).

Histidine 14, histidine 16, and histidine 194 together coordinate Zn(2+). Glutamate 197 functions as the Proton donor in the catalytic mechanism. Aspartate 275 is a binding site for Zn(2+). Aspartate 276 provides a ligand contact to substrate.

This sequence belongs to the metallo-dependent hydrolases superfamily. Adenosine and AMP deaminases family. Adenine deaminase type 2 subfamily. Zn(2+) serves as cofactor.

The enzyme catalyses adenine + H2O + H(+) = hypoxanthine + NH4(+). Functionally, catalyzes the hydrolytic deamination of adenine to hypoxanthine. Plays an important role in the purine salvage pathway and in nitrogen catabolism. This chain is Adenine deaminase, found in Psychrobacter cryohalolentis (strain ATCC BAA-1226 / DSM 17306 / VKM B-2378 / K5).